Reading from the N-terminus, the 72-residue chain is uncharacterized protein (72 aa).

This is an uncharacterized protein from Dictyostelium discoideum (Social amoeba).